The following is a 665-amino-acid chain: GRB2-associated-binding protein 2 (665 aa).

The residue at position 2 (Ser2) is a Phosphoserine. In terms of domain architecture, PH spans 8 to 119 (DVVCTGWLRK…WVQSICQICG (112 aa)). The interval 131–183 (RNLSSASHGPRSSPAEFSSSQHLLRERKSSAPSHSSQPTLFTFEPPMTSHMQP) is disordered. 10 positions are modified to phosphoserine: Ser135, Ser142, Ser143, Ser149, Ser150, Ser160, Ser165, Ser211, Ser220, and Ser261. The span at 160-170 (SAPSHSSQPTL) shows a compositional bias: polar residues. Thr262 is modified (phosphothreonine). Position 263 is a phosphotyrosine (Tyr263). The residue at position 275 (Thr275) is a Phosphothreonine. Ser278 and Ser282 each carry phosphoserine. Position 284 is a phosphothreonine (Thr284). Tyr290 carries the post-translational modification Phosphotyrosine. Position 328 is a phosphothreonine (Thr328). Disordered regions lie at residues 340-442 (TSGD…ENYV) and 491-517 (PSRG…PTPL). The SH3-binding signature appears at 348–355 (PPPRPPKP). Phosphoserine is present on Ser365. Residues Thr382 and Thr388 each carry the phosphothreonine modification. A Phosphoserine modification is found at Ser402. Thr405 is subject to Phosphothreonine. A compositionally biased stretch (low complexity) spans 412 to 423 (GSGESASWSAES). A phosphoserine mark is found at Ser420 and Ser423. Tyr441 bears the Phosphotyrosine mark. Positions 499 to 508 (PPPVNRNLKP) match the SH3-binding motif. At Ser532 the chain carries Phosphoserine. Polar residues-rich tracts occupy residues 548-566 (SSSQ…STDS) and 578-600 (NPVS…STGS). The segment at 548–631 (SSSQYCRPIS…SSVTSDEKVD (84 aa)) is disordered. Ser612 is modified (phosphoserine). Tyr632 bears the Phosphotyrosine mark. The span at 646-659 (TMQEWTDVRQSSEP) shows a compositional bias: polar residues. Positions 646-665 (TMQEWTDVRQSSEPSKGAKL) are disordered.

Belongs to the GAB family. Part of a complex composed of EEIG1, TNFRSF11A/RANK, PLCG2, GAB2, TEC and BTK; complex formation increases in the presence of TNFSF11/RANKL. Interacts with HCK. Interacts with SHC1; may mediate interaction with receptors. Interacts with SYK. Interacts with PI-3 kinase. Interacts with GRB2 (via SH3 2 domain). Interacts (phosphorylated) with PTPN11. Interacts with TNFRSF11A (via cytoplasmic domain). Interacts (phosphorylated) with 14-3-3 family proteins SFN, YWHAB, YWHAE, YWHAG, YWHAH, YWHAQ and YWHAZ; prevents interaction with GRB2 and attenuates GAB2 signaling. Phosphorylated upon EGF stimulation. Phosphorylated on tyrosine residues by HCK upon IL6 signaling. Phosphorylated on tyrosine residue(s) by the thrombopoietin receptor (TPOR), stem cell factor receptor (SCFR), and T-cell and B-cell antigen receptors, gp130, IL-2R and IL-3R. Phosphorylated upon stimulation of TNFRSF11A/RANK by TNFSF11/RANKL. Post-translationally, dephosphorylated by PTPN11.

It is found in the cytoplasm. Its subcellular location is the cell membrane. The protein localises to the membrane raft. In terms of biological role, adapter protein which acts downstream of several membrane receptors including cytokine, antigen, hormone, cell matrix and growth factor receptors to regulate multiple signaling pathways. Regulates osteoclast differentiation mediating the TNFRSF11A/RANK signaling. In allergic response, it plays a role in mast cells activation and degranulation through PI-3-kinase regulation. Also involved in the regulation of cell proliferation and hematopoiesis. In Rattus norvegicus (Rat), this protein is GRB2-associated-binding protein 2 (Gab2).